We begin with the raw amino-acid sequence, 542 residues long: MARYVFITGGVVSSLGKGIAAAALGALLQARGYRVRLRKLDPYLNVDPGTMSPTQHGEVFVTDDGAETDLDLGHYERFTGRSATKTDNITTGRIYKNIIDKERRGDYLGATVQVIPHVTNEIKDFVIEGNDDYDFVICEIGGTVGDIEAMPFMEAIRQLGNDLPRGTAVYVHLTLMPYIPAAGELKTKPTQHSVKELQALGIHPDILLVRADREIPEAERRKLSLFCNVRPSAVIQALDVANIYDVPIAYHKEGLDDEVLAAFGIEPAPKPRLDPWEEVCNRIRTPEGEVTIAIVGKYTGLKDAYKSLIEALHHGGIANRVKVKLEWIESEVFEKEDPAPYLEKVHGILVPGGFGERGSEGKIHAARFARERKVPYFGICFGMQMAVIEAARNLADVSGASSTEFGPTKEPVVGLMTEWVKGNELQKRTAAGDLGGTMRLGAYKAALKKGTKISDIYGSTDISERHRHRYEVNVDYKDRLESCGLVFSGMSPDGVLPETIEYPDHPWFIGVQYHPELKSRPLDPHPLFASFIEAATEQSRLV.

The amidoligase domain stretch occupies residues 1–265; sequence MARYVFITGG…DDEVLAAFGI (265 aa). Ser-13 serves as a coordination point for CTP. Ser-13 serves as a coordination point for UTP. Residues 14 to 19 and Asp-71 contribute to the ATP site; that span reads SLGKGI. Positions 71 and 139 each coordinate Mg(2+). Residues 146-148, 186-191, and Lys-222 each bind CTP; these read DIE and KTKPTQ. Residues 186–191 and Lys-222 each bind UTP; that span reads KTKPTQ. Residues 291 to 541 enclose the Glutamine amidotransferase type-1 domain; the sequence is TIAIVGKYTG…IEAATEQSRL (251 aa). Gly-353 serves as a coordination point for L-glutamine. Cys-380 acts as the Nucleophile; for glutamine hydrolysis in catalysis. Residues 381–384, Glu-404, and Arg-469 contribute to the L-glutamine site; that span reads FGMQ. Active-site residues include His-514 and Glu-516.

The protein belongs to the CTP synthase family. In terms of assembly, homotetramer.

The enzyme catalyses UTP + L-glutamine + ATP + H2O = CTP + L-glutamate + ADP + phosphate + 2 H(+). It catalyses the reaction L-glutamine + H2O = L-glutamate + NH4(+). The catalysed reaction is UTP + NH4(+) + ATP = CTP + ADP + phosphate + 2 H(+). The protein operates within pyrimidine metabolism; CTP biosynthesis via de novo pathway; CTP from UDP: step 2/2. With respect to regulation, allosterically activated by GTP, when glutamine is the substrate; GTP has no effect on the reaction when ammonia is the substrate. The allosteric effector GTP functions by stabilizing the protein conformation that binds the tetrahedral intermediate(s) formed during glutamine hydrolysis. Inhibited by the product CTP, via allosteric rather than competitive inhibition. In terms of biological role, catalyzes the ATP-dependent amination of UTP to CTP with either L-glutamine or ammonia as the source of nitrogen. Regulates intracellular CTP levels through interactions with the four ribonucleotide triphosphates. This chain is CTP synthase, found in Rhizobium leguminosarum bv. trifolii (strain WSM2304).